Here is a 107-residue protein sequence, read N- to C-terminus: Ferredoxin-1 (107 aa).

2 4Fe-4S ferredoxin-type domains span residues 2–30 (AFVV…YEGP) and 31–60 (NFLV…SEDE). 2 residues coordinate [3Fe-4S] cluster: C9 and C17. Residues C21, C40, C43, and C46 each contribute to the [4Fe-4S] cluster site. C50 contacts [3Fe-4S] cluster. A disordered region spans residues 84 to 107 (EKKDPLPDAEDWDGVKGKLQHLER). Over residues 96–107 (DGVKGKLQHLER) the composition is skewed to basic and acidic residues.

Requires [4Fe-4S] cluster as cofactor. [3Fe-4S] cluster serves as cofactor.

Its function is as follows. Ferredoxins are iron-sulfur proteins that transfer electrons in a wide variety of metabolic reactions. This ferredoxin could play a role in regulating gene expression by interacting directly with DNA. This Azotobacter vinelandii protein is Ferredoxin-1 (fdxA).